The chain runs to 316 residues: Ribosomal protein L11 methyltransferase (316 aa).

Residues Thr-162, Gly-183, Asp-205, and Asn-248 each coordinate S-adenosyl-L-methionine.

The protein belongs to the methyltransferase superfamily. PrmA family.

It is found in the cytoplasm. It catalyses the reaction L-lysyl-[protein] + 3 S-adenosyl-L-methionine = N(6),N(6),N(6)-trimethyl-L-lysyl-[protein] + 3 S-adenosyl-L-homocysteine + 3 H(+). Functionally, methylates ribosomal protein L11. This Levilactobacillus brevis (strain ATCC 367 / BCRC 12310 / CIP 105137 / JCM 1170 / LMG 11437 / NCIMB 947 / NCTC 947) (Lactobacillus brevis) protein is Ribosomal protein L11 methyltransferase.